The sequence spans 121 residues: Large ribosomal subunit protein uL14 (121 aa).

It belongs to the universal ribosomal protein uL14 family. Part of the 50S ribosomal subunit. Forms a cluster with proteins L3 and L19. In the 70S ribosome, L14 and L19 interact and together make contacts with the 16S rRNA in bridges B5 and B8.

Binds to 23S rRNA. Forms part of two intersubunit bridges in the 70S ribosome. The polypeptide is Large ribosomal subunit protein uL14 (Legionella pneumophila (strain Paris)).